We begin with the raw amino-acid sequence, 322 residues long: AA9 family lytic polysaccharide monooxygenase B (322 aa).

An N-terminal signal peptide occupies residues 1–17; sequence MFSKSIIAASLLTAVTA. Cu(2+) is bound at residue histidine 18. N-linked (GlcNAc...) asparagine glycans are attached at residues asparagine 53 and asparagine 68. Residues cysteine 56 and cysteine 173 are joined by a disulfide bond. Histidine 87 is a Cu(2+) binding site. N-linked (GlcNAc...) asparagine glycosylation is found at asparagine 121 and asparagine 133. O2 contacts are provided by histidine 159 and glutamine 168. Tyrosine 170 provides a ligand contact to Cu(2+). The N-linked (GlcNAc...) asparagine glycan is linked to asparagine 197.

Belongs to the polysaccharide monooxygenase AA9 family. Requires Cu(2+) as cofactor.

The protein resides in the secreted. It catalyses the reaction [(1-&gt;4)-beta-D-glucosyl]n+m + reduced acceptor + O2 = 4-dehydro-beta-D-glucosyl-[(1-&gt;4)-beta-D-glucosyl]n-1 + [(1-&gt;4)-beta-D-glucosyl]m + acceptor + H2O.. In terms of biological role, lytic polysaccharide monooxygenase (LPMO) that depolymerizes crystalline and amorphous polysaccharides via the oxidation of scissile alpha- or beta-(1-4)-glycosidic bonds, yielding C1 and C4 oxidation products. Catalysis by LPMOs requires the reduction of the active-site copper from Cu(II) to Cu(I) by a reducing agent and H(2)O(2) or O(2) as a cosubstrate. The polypeptide is AA9 family lytic polysaccharide monooxygenase B (Botryotinia fuckeliana (strain B05.10) (Noble rot fungus)).